The following is a 259-amino-acid chain: Thiazole synthase (259 aa).

Lys-99 (schiff-base intermediate with DXP) is an active-site residue. Residues Gly-161, Ala-187 to Gly-188, and Asn-209 to Thr-210 contribute to the 1-deoxy-D-xylulose 5-phosphate site.

This sequence belongs to the ThiG family. Homotetramer. Forms heterodimers with either ThiH or ThiS.

It is found in the cytoplasm. It carries out the reaction [ThiS sulfur-carrier protein]-C-terminal-Gly-aminoethanethioate + 2-iminoacetate + 1-deoxy-D-xylulose 5-phosphate = [ThiS sulfur-carrier protein]-C-terminal Gly-Gly + 2-[(2R,5Z)-2-carboxy-4-methylthiazol-5(2H)-ylidene]ethyl phosphate + 2 H2O + H(+). The protein operates within cofactor biosynthesis; thiamine diphosphate biosynthesis. In terms of biological role, catalyzes the rearrangement of 1-deoxy-D-xylulose 5-phosphate (DXP) to produce the thiazole phosphate moiety of thiamine. Sulfur is provided by the thiocarboxylate moiety of the carrier protein ThiS. In vitro, sulfur can be provided by H(2)S. In Nautilia profundicola (strain ATCC BAA-1463 / DSM 18972 / AmH), this protein is Thiazole synthase.